The primary structure comprises 209 residues: MEPLAAYPLKCSGPRAKVFAVLLSIVLCTVTLFLLQLKFLKPKINSFYAFEVKDAKGRTVSLEKYKGKVSLVVNVASDCQLTDRNYLGLKELHKEFGPSHFSVLAFPCNQFGESEPRPSKEVESFARKNYGVTFPIFHKIKILGSEGEPAFRFLVDSSKKEPRWNFWKYLVNPEGQVVKFWKPEEPIEVIRPDIAALVRQVIIKKKEDL.

Methionine 1 bears the N-acetylmethionine mark. The helical transmembrane segment at 18–40 (VFAVLLSIVLCTVTLFLLQLKFL) threads the bilayer. Residue cysteine 79 is part of the active site.

Belongs to the glutathione peroxidase family.

The protein resides in the membrane. The enzyme catalyses 2 glutathione + H2O2 = glutathione disulfide + 2 H2O. This chain is Probable glutathione peroxidase 8 (GPX8), found in Homo sapiens (Human).